A 255-amino-acid chain; its full sequence is 1-(5-phosphoribosyl)-5-[(5-phosphoribosylamino)methylideneamino] imidazole-4-carboxamide isomerase (255 aa).

Catalysis depends on Asp-8, which acts as the Proton acceptor. Asp-129 serves as the catalytic Proton donor.

This sequence belongs to the HisA/HisF family.

The protein resides in the cytoplasm. It catalyses the reaction 1-(5-phospho-beta-D-ribosyl)-5-[(5-phospho-beta-D-ribosylamino)methylideneamino]imidazole-4-carboxamide = 5-[(5-phospho-1-deoxy-D-ribulos-1-ylimino)methylamino]-1-(5-phospho-beta-D-ribosyl)imidazole-4-carboxamide. It functions in the pathway amino-acid biosynthesis; L-histidine biosynthesis; L-histidine from 5-phospho-alpha-D-ribose 1-diphosphate: step 4/9. The chain is 1-(5-phosphoribosyl)-5-[(5-phosphoribosylamino)methylideneamino] imidazole-4-carboxamide isomerase from Prochlorococcus marinus (strain MIT 9211).